Consider the following 751-residue polypeptide: Catalase-peroxidase (751 aa).

The tract at residues 1 to 21 (MSNESKCPFHQTAGGGTTNRD) is disordered. The segment at residues 90–244 (WHSAGTYRIG…LAAVQMGLIY (155 aa)) is a cross-link (tryptophyl-tyrosyl-methioninium (Trp-Tyr) (with M-270)). Residue His91 is the Proton acceptor of the active site. The tract at residues 195–227 (YGKDQVKAQPPGQGDLVAEPAKHGEEQNRDLSA) is disordered. Residues 214–227 (PAKHGEEQNRDLSA) show a composition bias toward basic and acidic residues. The segment at residues 244–270 (YVNPEGPEGNPDPVASGKDIRETFGRM) is a cross-link (tryptophyl-tyrosyl-methioninium (Tyr-Met) (with W-90)). His285 provides a ligand contact to heme b. Residues 364–385 (GAHQWRPKDGKGAGTVPDAHDP) form a disordered region.

Belongs to the peroxidase family. Peroxidase/catalase subfamily. Homodimer or homotetramer. Heme b is required as a cofactor. Formation of the three residue Trp-Tyr-Met cross-link is important for the catalase, but not the peroxidase activity of the enzyme.

The catalysed reaction is H2O2 + AH2 = A + 2 H2O. It carries out the reaction 2 H2O2 = O2 + 2 H2O. Its function is as follows. Bifunctional enzyme with both catalase and broad-spectrum peroxidase activity. The sequence is that of Catalase-peroxidase from Pseudomonas putida (strain ATCC 47054 / DSM 6125 / CFBP 8728 / NCIMB 11950 / KT2440).